A 165-amino-acid polypeptide reads, in one-letter code: Chorismate pyruvate-lyase (165 aa).

Substrate-binding residues include methionine 35, arginine 77, leucine 115, and glutamate 156.

This sequence belongs to the UbiC family. As to quaternary structure, monomer.

It is found in the cytoplasm. It catalyses the reaction chorismate = 4-hydroxybenzoate + pyruvate. It participates in cofactor biosynthesis; ubiquinone biosynthesis. Removes the pyruvyl group from chorismate, with concomitant aromatization of the ring, to provide 4-hydroxybenzoate (4HB) for the ubiquinone pathway. The sequence is that of Chorismate pyruvate-lyase from Salmonella schwarzengrund (strain CVM19633).